The following is a 276-amino-acid chain: Pirin-like protein CC_0481 (276 aa).

It belongs to the pirin family.

The protein is Pirin-like protein CC_0481 of Caulobacter vibrioides (strain ATCC 19089 / CIP 103742 / CB 15) (Caulobacter crescentus).